Reading from the N-terminus, the 425-residue chain is Tyrosine--tRNA ligase (425 aa).

Tyr37 contributes to the L-tyrosine binding site. A 'HIGH' region motif is present at residues 42–51 (PTADSLHLGH). 2 residues coordinate L-tyrosine: Tyr174 and Gln178. Positions 234-238 (KFGKS) match the 'KMSKS' region motif. Lys237 serves as a coordination point for ATP. Positions 357 to 422 (DGLIDALAAS…RGKKLYALLV (66 aa)) constitute an S4 RNA-binding domain.

This sequence belongs to the class-I aminoacyl-tRNA synthetase family. TyrS type 1 subfamily. Homodimer.

It localises to the cytoplasm. The enzyme catalyses tRNA(Tyr) + L-tyrosine + ATP = L-tyrosyl-tRNA(Tyr) + AMP + diphosphate + H(+). Functionally, catalyzes the attachment of tyrosine to tRNA(Tyr) in a two-step reaction: tyrosine is first activated by ATP to form Tyr-AMP and then transferred to the acceptor end of tRNA(Tyr). This Laribacter hongkongensis (strain HLHK9) protein is Tyrosine--tRNA ligase.